Here is a 438-residue protein sequence, read N- to C-terminus: Putative phospholipase A2 (438 aa).

S257 (nucleophile) is an active-site residue. Catalysis depends on charge relay system residues D291 and H368.

It belongs to the serine esterase family.

It is found in the cytoplasm. The protein localises to the nucleus. The catalysed reaction is a 1-O-alkyl-2-acetyl-sn-glycero-3-phosphocholine + H2O = a 1-O-alkyl-sn-glycero-3-phosphocholine + acetate + H(+). The polypeptide is Putative phospholipase A2 (Schizosaccharomyces pombe (strain 972 / ATCC 24843) (Fission yeast)).